The sequence spans 198 residues: Formate-dependent nitrite reductase complex subunit NrfG (198 aa).

TPR repeat units lie at residues 73 to 106 and 144 to 177; these read SEQW…RGEN and ITAL…NSPR.

In terms of biological role, required for formate-dependent nitrite reduction. Not required for the biosynthesis of any of the c-type cytochromes nor for the secretion of the periplasmic cytochromes. This chain is Formate-dependent nitrite reductase complex subunit NrfG (nrfG), found in Escherichia coli O157:H7.